Reading from the N-terminus, the 973-residue chain is Splicing regulator ARVCF (973 aa).

Residues 95–123 (VTVEEDPGTPTSHVSIVTSEDGTTRRTET) are disordered. Thr-103 and Thr-105 each carry phosphothreonine. Positions 103–115 (TPTSHVSIVTSED) are enriched in polar residues. Residue Arg-171 is modified to Omega-N-methylarginine. Disordered regions lie at residues 233 to 254 (RREAFPMGSESGPPSGRSLPEH) and 267 to 331 (RSLA…QPER). Ser-268 is subject to Phosphoserine. Residues 271–281 (ADDEGGPDLEP) show a composition bias toward acidic residues. The segment covering 289–303 (RRPEYGRGLRARALE) has biased composition (basic and acidic residues). Phosphoserine is present on residues Ser-333, Ser-336, Ser-344, and Ser-346. 6 ARM repeats span residues 349 to 388 (STRKEPRWRDPELPEVLAMLRHPVDPVKANAAAYLQHLCF), 391 to 430 (EGIKRRVRQLRGLPLLVALLDHPRAEVRRRACGALRNLSY), 434 to 468 (ADNKAAIRDCGGVPALVRLLRAARDNEVRELVTGT), 469 to 509 (LWNL…NEDS), 527 to 566 (LRNVSSDGAEARRRLRECEGLVDALLHALQSAVGRKDTDN), and 576 to 623 (MRNL…GKKA). Residues 593–623 (YQEVEPGIPGSAATSQRRRKDDASCFGGKKA) form a disordered region. At Ser-607 the chain carries Phosphoserine. The Nuclear localization signal signature appears at 608-624 (QRRRKDDASCFGGKKAK). Residue Thr-637 is modified to Phosphothreonine. 4 ARM repeats span residues 641 to 681 (PKRT…AAGA), 694 to 733 (TYIRATVRKERGLPVLVELLQSETDKVVRAVAIALRNLSL), 734 to 776 (DQRN…AVLN), and 777 to 821 (TIHE…SHVL). The tract at residues 771–955 (VVAVLNTIHE…VLGPGAPPFC (185 aa)) is required for interaction with RNA-binding proteins DDX5, HNRNPH2 and SRSF1 and with mRNAs. Residues 844-926 (FQSASTAKGP…KELLKGPGPA (83 aa)) are disordered. At Ser-865 the chain carries Phosphoserine. Thr-866 carries the post-translational modification Phosphothreonine. The span at 872–881 (KNLDGEKSTT) shows a compositional bias: basic and acidic residues.

Belongs to the beta-catenin family. In terms of assembly, component of a ribonucleoprotein complex containing mRNAs and RNA-binding proteins including DDX5, HNRNPH2 and SRSF1 as well as ARVCF. Interacts (via the extreme C-terminus) with FRMPD2 (via the PDZ 2 domain). Interacts with CCDC85B. Expressed in optic nerve sheath envelope (at protein level). Expressed in heart (at protein level).

The protein resides in the cell junction. It localises to the adherens junction. Its subcellular location is the nucleus. It is found in the cytoplasm. Functionally, contributes to the regulation of alternative splicing of pre-mRNAs. The protein is Splicing regulator ARVCF of Rattus norvegicus (Rat).